We begin with the raw amino-acid sequence, 1052 residues long: Focal adhesion kinase 1 (1052 aa).

Residues 1–27 are disordered; the sequence is MAAAYLDPNLNHTPSSSTKTHLGTGME. Residue Ala-2 is modified to N-acetylalanine. Residue Tyr-5 is modified to Phosphotyrosine. Residues 10–21 are compositionally biased toward polar residues; that stretch reads LNHTPSSSTKTH. Thr-13 carries the phosphothreonine modification. Phosphoserine occurs at positions 29 and 54. Positions 35–355 constitute an FERM domain; sequence RVLKVFHYFE…GYCRLVNGAT (321 aa). Residue Lys-152 forms a Glycyl lysine isopeptide (Lys-Gly) (interchain with G-Cter in SUMO) linkage. Residues Tyr-397 and Tyr-407 each carry the phosphotyrosine modification. Tyr-397 carries the phosphotyrosine; by autocatalysis modification. Residues 428–434, Lys-454, and 500–502 contribute to the ATP site; these read IGEGQFG and ELC. Residues 431-680 enclose the Protein kinase domain; sequence GQFGDVHQGV…ELKAQLSTIL (250 aa). The Proton acceptor role is filled by Asp-546. Position 570 is a phosphotyrosine (Tyr-570). Phosphotyrosine; by RET and SRC occurs at positions 576 and 577. Ser-580 bears the Phosphoserine mark. Over residues 685–697 the composition is skewed to basic and acidic residues; sequence VQQEERMRMESRR. Disordered regions lie at residues 685-734 and 837-921; these read VQQE…PSPQ and VRLS…DRSN. Positions 707 to 1052 are interaction with TGFB1I1; it reads GSDEAPPKPS…LKMLGQTRPH (346 aa). Ser-722 carries the phosphoserine modification. Ser-732 carries the phosphoserine; by CDK5 modification. Positions 837 to 849 are enriched in basic and acidic residues; sequence VRLSRGSIDREDG. Phosphoserine is present on Ser-843. At Tyr-861 the chain carries Phosphotyrosine. Over residues 869–880 the composition is skewed to pro residues; the sequence is PAAPPKKPPRPG. Residues 886 to 896 are compositionally biased toward polar residues; it reads SNLSSISSPAD. Ser-910 bears the Phosphoserine mark. Residues 912 to 1052 form an interaction with ARHGEF28 region; the sequence is PPTANLDRSN…LKMLGQTRPH (141 aa). Residue Thr-914 is modified to Phosphothreonine. Tyr-925 carries the phosphotyrosine; by SRC modification.

It belongs to the protein kinase superfamily. Tyr protein kinase family. FAK subfamily. In terms of assembly, interacts with GIT1. Component of a complex that contains at least FER, CTTN and PTK2/FAK1. Interacts with BMX. Interacts with STEAP4. Interacts with ZFYVE21. Interacts with ESR1. Interacts with FGR, FLT4 and RET. Interacts with EPHA2 in resting cells; activation of EPHA2 recruits PTPN11, leading to dephosphorylation of PTK2/FAK1 and dissociation of the complex. Interacts with EPHA1 (kinase activity-dependent). Interacts with MISP. Interacts with PIAS1. Interacts with ARHGAP26 and SHC1. Interacts with RB1CC1; this inhibits PTK2/FAK1 activity and activation of downstream signaling pathways. Interacts with P53/TP53. Interacts with STAT1. Interacts with WASL. Interacts with ARHGEF7. Interacts with DCC. Interacts (via first Pro-rich region) with CAS family members (via SH3 domain), including BCAR1, BCAR3 and CASS4. Interacts with NEDD9 (via C-terminus). Interacts with SORBS1. Interacts with ARHGEF28. Interacts with SHB. Part of a complex composed of THSD1, PTK2/FAK1, TLN1 and VCL. Interacts with PXN and TLN1. Interacts with TGFB1I1. Interacts with PIK3R1 or PIK3R2. Interacts with SRC, GRB2 and GRB7. Interacts with LPXN (via LD motif 3). Interacts with CD36. Interacts with EMP2; regulates PTK2 activation and localization. Interacts with DSCAM. Interacts with AMBRA1. Interacts (when tyrosine-phosphorylated) with tensin TNS1; the interaction is increased by phosphorylation of TNS1. Post-translationally, phosphorylated on tyrosine residues upon activation, e.g. upon integrin signaling. Tyr-397 is the major autophosphorylation site, but other kinases can also phosphorylate this residue. Phosphorylation at Tyr-397 promotes interaction with SRC and SRC family members, leading to phosphorylation at Tyr-576, Tyr-577 and at additional tyrosine residues. FGR promotes phosphorylation at Tyr-397 and Tyr-576. FER promotes phosphorylation at Tyr-577, Tyr-861 and Tyr-925, even when cells are not adherent. Tyr-397, Tyr-576 and Ser-722 are phosphorylated only when cells are adherent. Phosphorylation at Tyr-397 is important for interaction with BMX, PIK3R1 and SHC1. Phosphorylation at Tyr-925 is important for interaction with GRB2. Dephosphorylated by PTPN11; PTPN11 is recruited to PTK2 via EPHA2 (tyrosine phosphorylated). Microtubule-induced dephosphorylation at Tyr-397 is crucial for the induction of focal adhesion disassembly; this dephosphorylation could be catalyzed by PTPN11 and regulated by ZFYVE21. Phosphorylation on tyrosine residues is enhanced by NTN1. Sumoylated; this enhances autophosphorylation.

The protein resides in the cell junction. It localises to the focal adhesion. It is found in the cell membrane. The protein localises to the cytoplasm. Its subcellular location is the perinuclear region. The protein resides in the cell cortex. It localises to the cytoskeleton. It is found in the microtubule organizing center. The protein localises to the centrosome. Its subcellular location is the nucleus. The protein resides in the cilium basal body. It carries out the reaction L-tyrosyl-[protein] + ATP = O-phospho-L-tyrosyl-[protein] + ADP + H(+). Its activity is regulated as follows. Subject to autoinhibition, mediated by interactions between the FERM domain and the kinase domain. Activated by autophosphorylation at Tyr-397. This promotes interaction with SRC and phosphorylation at Tyr-576 and Tyr-577 in the kinase activation loop by SRC. Phosphorylation at Tyr-397, Tyr-576 and Tyr-577 is required for maximal kinase activity. Non-receptor protein-tyrosine kinase that plays an essential role in regulating cell migration, adhesion, spreading, reorganization of the actin cytoskeleton, formation and disassembly of focal adhesions and cell protrusions, cell cycle progression, cell proliferation and apoptosis. Required for early embryonic development and placenta development. Required for embryonic angiogenesis, normal cardiomyocyte migration and proliferation, and normal heart development. Regulates axon growth and neuronal cell migration, axon branching and synapse formation; required for normal development of the nervous system. Plays a role in osteogenesis and differentiation of osteoblasts. Functions in integrin signal transduction, but also in signaling downstream of numerous growth factor receptors, G-protein coupled receptors (GPCR), EPHA2, netrin receptors and LDL receptors. Forms multisubunit signaling complexes with SRC and SRC family members upon activation; this leads to the phosphorylation of additional tyrosine residues, creating binding sites for scaffold proteins, effectors and substrates. Regulates numerous signaling pathways. Promotes activation of phosphatidylinositol 3-kinase and the AKT1 signaling cascade. Promotes activation of MAPK1/ERK2, MAPK3/ERK1 and the MAP kinase signaling cascade. Promotes localized and transient activation of guanine nucleotide exchange factors (GEFs) and GTPase-activating proteins (GAPs), and thereby modulates the activity of Rho family GTPases. Signaling via CAS family members mediates activation of RAC1. Phosphorylates NEDD9 following integrin stimulation. Recruits the ubiquitin ligase MDM2 to P53/TP53 in the nucleus, and thereby regulates P53/TP53 activity, P53/TP53 ubiquitination and proteasomal degradation. Phosphorylates SRC; this increases SRC kinase activity. Phosphorylates ACTN1, ARHGEF7, GRB7, RET and WASL. Promotes phosphorylation of PXN and STAT1; most likely PXN and STAT1 are phosphorylated by a SRC family kinase that is recruited to autophosphorylated PTK2/FAK1, rather than by PTK2/FAK1 itself. Promotes phosphorylation of BCAR1; GIT2 and SHC1; this requires both SRC and PTK2/FAK1. Promotes phosphorylation of BMX and PIK3R1. Its function is as follows. Does not contain a kinase domain and inhibits PTK2/FAK1 phosphorylation and signaling. Its enhanced expression can attenuate the nuclear accumulation of LPXN and limit its ability to enhance serum response factor (SRF)-dependent gene transcription. This chain is Focal adhesion kinase 1, found in Mus musculus (Mouse).